The primary structure comprises 125 residues: Holo-[acyl-carrier-protein] synthase (125 aa).

The Mg(2+) site is built by D8 and E57.

Belongs to the P-Pant transferase superfamily. AcpS family. Mg(2+) serves as cofactor.

Its subcellular location is the cytoplasm. The catalysed reaction is apo-[ACP] + CoA = holo-[ACP] + adenosine 3',5'-bisphosphate + H(+). Its function is as follows. Transfers the 4'-phosphopantetheine moiety from coenzyme A to a Ser of acyl-carrier-protein. The polypeptide is Holo-[acyl-carrier-protein] synthase (Koribacter versatilis (strain Ellin345)).